A 361-amino-acid polypeptide reads, in one-letter code: D-alanine--D-alanine ligase (361 aa).

In terms of domain architecture, ATP-grasp spans 134–344 (KILAQRAGVP…YTDLITKLID (211 aa)). ATP is bound at residue 169-224 (ASQLGSDLFVKPSNQGSSVGVSHVTNEKEYKVALAEAFKYDDKVLVEETVHGTEVE). Mg(2+) is bound by residues Asp-297, Glu-311, and Asn-313.

This sequence belongs to the D-alanine--D-alanine ligase family. The cofactor is Mg(2+). Requires Mn(2+) as cofactor.

It is found in the cytoplasm. It catalyses the reaction 2 D-alanine + ATP = D-alanyl-D-alanine + ADP + phosphate + H(+). It participates in cell wall biogenesis; peptidoglycan biosynthesis. Cell wall formation. The protein is D-alanine--D-alanine ligase of Lactobacillus gasseri (strain ATCC 33323 / DSM 20243 / BCRC 14619 / CIP 102991 / JCM 1131 / KCTC 3163 / NCIMB 11718 / NCTC 13722 / AM63).